The chain runs to 403 residues: Phosphopentomutase (403 aa).

Mn(2+)-binding residues include aspartate 13, aspartate 298, histidine 303, aspartate 339, histidine 340, and histidine 351.

The protein belongs to the phosphopentomutase family. It depends on Mn(2+) as a cofactor.

Its subcellular location is the cytoplasm. It carries out the reaction 2-deoxy-alpha-D-ribose 1-phosphate = 2-deoxy-D-ribose 5-phosphate. The catalysed reaction is alpha-D-ribose 1-phosphate = D-ribose 5-phosphate. The protein operates within carbohydrate degradation; 2-deoxy-D-ribose 1-phosphate degradation; D-glyceraldehyde 3-phosphate and acetaldehyde from 2-deoxy-alpha-D-ribose 1-phosphate: step 1/2. Functionally, isomerase that catalyzes the conversion of deoxy-ribose 1-phosphate (dRib-1-P) and ribose 1-phosphate (Rib-1-P) to deoxy-ribose 5-phosphate (dRib-5-P) and ribose 5-phosphate (Rib-5-P), respectively. The polypeptide is Phosphopentomutase (Streptococcus gordonii (strain Challis / ATCC 35105 / BCRC 15272 / CH1 / DL1 / V288)).